The sequence spans 436 residues: Trigger factor (436 aa).

The 86-residue stretch at 163-248 (GDTVNIDFDG…VNEIKYKDVP (86 aa)) folds into the PPIase FKBP-type domain.

The protein belongs to the FKBP-type PPIase family. Tig subfamily.

Its subcellular location is the cytoplasm. The catalysed reaction is [protein]-peptidylproline (omega=180) = [protein]-peptidylproline (omega=0). Involved in protein export. Acts as a chaperone by maintaining the newly synthesized protein in an open conformation. Functions as a peptidyl-prolyl cis-trans isomerase. This is Trigger factor from Staphylococcus saprophyticus subsp. saprophyticus (strain ATCC 15305 / DSM 20229 / NCIMB 8711 / NCTC 7292 / S-41).